Here is a 534-residue protein sequence, read N- to C-terminus: CTP synthase (534 aa).

An amidoligase domain region spans residues 1–265 (MKYIVVTGGV…TTRLMKHLKL (265 aa)). Serine 12 serves as a coordination point for CTP. Residue serine 12 coordinates UTP. 13–18 (GLGKGI) contributes to the ATP binding site. Residue tyrosine 53 participates in L-glutamine binding. Aspartate 70 contacts ATP. Mg(2+)-binding residues include aspartate 70 and glutamate 140. CTP contacts are provided by residues 147–149 (DIE), 186–191 (KTKPSQ), and lysine 222. UTP contacts are provided by residues 186–191 (KTKPSQ) and lysine 222. In terms of domain architecture, Glutamine amidotransferase type-1 spans 289-530 (KLAIVGKYTN…VRAMCKYNKE (242 aa)). Position 352 (glycine 352) interacts with L-glutamine. Cysteine 379 (nucleophile; for glutamine hydrolysis) is an active-site residue. L-glutamine-binding positions include 380–383 (LGMQ), glutamate 403, and arginine 460. Residues histidine 503 and glutamate 505 contribute to the active site.

Belongs to the CTP synthase family. In terms of assembly, homotetramer.

It carries out the reaction UTP + L-glutamine + ATP + H2O = CTP + L-glutamate + ADP + phosphate + 2 H(+). The enzyme catalyses L-glutamine + H2O = L-glutamate + NH4(+). The catalysed reaction is UTP + NH4(+) + ATP = CTP + ADP + phosphate + 2 H(+). It participates in pyrimidine metabolism; CTP biosynthesis via de novo pathway; CTP from UDP: step 2/2. With respect to regulation, allosterically activated by GTP, when glutamine is the substrate; GTP has no effect on the reaction when ammonia is the substrate. The allosteric effector GTP functions by stabilizing the protein conformation that binds the tetrahedral intermediate(s) formed during glutamine hydrolysis. Inhibited by the product CTP, via allosteric rather than competitive inhibition. Its function is as follows. Catalyzes the ATP-dependent amination of UTP to CTP with either L-glutamine or ammonia as the source of nitrogen. Regulates intracellular CTP levels through interactions with the four ribonucleotide triphosphates. The sequence is that of CTP synthase from Methanosarcina acetivorans (strain ATCC 35395 / DSM 2834 / JCM 12185 / C2A).